Consider the following 330-residue polypeptide: Glycerol-3-phosphate dehydrogenase [NAD(P)+] (330 aa).

NADPH contacts are provided by Trp13, Arg33, and Lys103. Lys103, Gly131, and Thr133 together coordinate sn-glycerol 3-phosphate. Ala135 lines the NADPH pocket. Sn-glycerol 3-phosphate-binding residues include Lys186, Asp239, Ser249, Arg250, and Asn251. Residue Lys186 is the Proton acceptor of the active site. Arg250 serves as a coordination point for NADPH. NADPH is bound by residues Val274 and Glu276.

It belongs to the NAD-dependent glycerol-3-phosphate dehydrogenase family.

The protein localises to the cytoplasm. It carries out the reaction sn-glycerol 3-phosphate + NAD(+) = dihydroxyacetone phosphate + NADH + H(+). The enzyme catalyses sn-glycerol 3-phosphate + NADP(+) = dihydroxyacetone phosphate + NADPH + H(+). It functions in the pathway membrane lipid metabolism; glycerophospholipid metabolism. Functionally, catalyzes the reduction of the glycolytic intermediate dihydroxyacetone phosphate (DHAP) to sn-glycerol 3-phosphate (G3P), the key precursor for phospholipid synthesis. This is Glycerol-3-phosphate dehydrogenase [NAD(P)+] from Erythrobacter litoralis (strain HTCC2594).